Reading from the N-terminus, the 329-residue chain is Ketol-acid reductoisomerase (NADP(+)) (329 aa).

A KARI N-terminal Rossmann domain is found at 2 to 182; it reads TQLFYDTDAD…GGTRAGILET (181 aa). Residues 25–28, S51, S53, and 83–86 contribute to the NADP(+) site; these read YGSQ and DEFQ. The active site involves H108. An NADP(+)-binding site is contributed by G134. Positions 183 to 328 constitute a KARI C-terminal knotted domain; that stretch reads NFKEETETDL…KGLRAMFSWL (146 aa). Residues D191, E195, E227, and E231 each contribute to the Mg(2+) site. A substrate-binding site is contributed by S252.

This sequence belongs to the ketol-acid reductoisomerase family. Requires Mg(2+) as cofactor.

It carries out the reaction (2R)-2,3-dihydroxy-3-methylbutanoate + NADP(+) = (2S)-2-acetolactate + NADPH + H(+). The catalysed reaction is (2R,3R)-2,3-dihydroxy-3-methylpentanoate + NADP(+) = (S)-2-ethyl-2-hydroxy-3-oxobutanoate + NADPH + H(+). It participates in amino-acid biosynthesis; L-isoleucine biosynthesis; L-isoleucine from 2-oxobutanoate: step 2/4. Its pathway is amino-acid biosynthesis; L-valine biosynthesis; L-valine from pyruvate: step 2/4. Involved in the biosynthesis of branched-chain amino acids (BCAA). Catalyzes an alkyl-migration followed by a ketol-acid reduction of (S)-2-acetolactate (S2AL) to yield (R)-2,3-dihydroxy-isovalerate. In the isomerase reaction, S2AL is rearranged via a Mg-dependent methyl migration to produce 3-hydroxy-3-methyl-2-ketobutyrate (HMKB). In the reductase reaction, this 2-ketoacid undergoes a metal-dependent reduction by NADPH to yield (R)-2,3-dihydroxy-isovalerate. The protein is Ketol-acid reductoisomerase (NADP(+)) of Prochlorococcus marinus (strain MIT 9515).